The sequence spans 101 residues: Small ribosomal subunit protein uS14 (101 aa).

This sequence belongs to the universal ribosomal protein uS14 family. As to quaternary structure, part of the 30S ribosomal subunit. Contacts proteins S3 and S10.

Binds 16S rRNA, required for the assembly of 30S particles and may also be responsible for determining the conformation of the 16S rRNA at the A site. This chain is Small ribosomal subunit protein uS14, found in Vibrio vulnificus (strain CMCP6).